A 715-amino-acid chain; its full sequence is Glycine--tRNA ligase beta subunit (715 aa).

Belongs to the class-II aminoacyl-tRNA synthetase family. In terms of assembly, tetramer of two alpha and two beta subunits.

The protein resides in the cytoplasm. The enzyme catalyses tRNA(Gly) + glycine + ATP = glycyl-tRNA(Gly) + AMP + diphosphate. The polypeptide is Glycine--tRNA ligase beta subunit (Nitrosomonas europaea (strain ATCC 19718 / CIP 103999 / KCTC 2705 / NBRC 14298)).